The primary structure comprises 417 residues: Putative transporter AmpG 1 (417 aa).

Helical transmembrane passes span Leu7–Thr27, Ile42–Phe62, Leu78–Leu98, Leu104–Ile124, Gly143–Leu163, Glu171–Ile191, Ala225–Tyr245, Val273–Met293, Ser301–Ile321, Leu328–Ile348, Phe366–Val386, and Phe389–Leu409.

Belongs to the major facilitator superfamily.

Its subcellular location is the cell inner membrane. The chain is Putative transporter AmpG 1 (ampG1) from Rickettsia conorii (strain ATCC VR-613 / Malish 7).